Reading from the N-terminus, the 495-residue chain is Putative aldehyde dehydrogenase DhaS (495 aa).

Residue 244 to 249 (GSTEIG) participates in NAD(+) binding. Residues Glu-266 and Cys-300 contribute to the active site.

This sequence belongs to the aldehyde dehydrogenase family.

It carries out the reaction an aldehyde + NAD(+) + H2O = a carboxylate + NADH + 2 H(+). In Bacillus subtilis (strain 168), this protein is Putative aldehyde dehydrogenase DhaS (dhaS).